Consider the following 36-residue polypeptide: Protein YnfP (36 aa).

The sequence is that of Protein YnfP from Escherichia coli (strain K12).